A 552-amino-acid chain; its full sequence is Nucleolar complex protein 4 (552 aa).

It belongs to the CBF/MAK21 family. As to quaternary structure, interacts with NOP14 and MPP10. Interacts with snoRNA U3. Component of the ribosomal small subunit (SSU) processome composed of at least 40 protein subunits and snoRNA U3.

Its subcellular location is the nucleus. The protein resides in the nucleolus. Functionally, involved in nucleolar processing of pre-18S ribosomal RNA and ribosome assembly. Has a role in the nuclear export of 40S pre-ribosomal subunit to the cytoplasm. Its subcellular location and association with pre-40S subunit are unaffected by RPS19 disruptions, suggesting it acts before the ribosomal protein. This Saccharomyces cerevisiae (strain ATCC 204508 / S288c) (Baker's yeast) protein is Nucleolar complex protein 4 (NOC4).